The following is a 448-amino-acid chain: NADP-specific glutamate dehydrogenase (448 aa).

The substrate site is built by K88, Q109, and K112. K124 serves as the catalytic Proton donor. Substrate is bound at residue G163. NADP(+)-binding residues include T207 and N238. Position 381 (S381) interacts with substrate.

This sequence belongs to the Glu/Leu/Phe/Val dehydrogenases family. In terms of assembly, homohexamer.

The catalysed reaction is L-glutamate + NADP(+) + H2O = 2-oxoglutarate + NH4(+) + NADPH + H(+). Functionally, catalyzes the reversible oxidative deamination of glutamate to alpha-ketoglutarate and ammonia. This Helicobacter pylori (strain ATCC 700392 / 26695) (Campylobacter pylori) protein is NADP-specific glutamate dehydrogenase (gdhA).